The sequence spans 100 residues: Small ribosomal subunit protein uS14c (100 aa).

The protein belongs to the universal ribosomal protein uS14 family. As to quaternary structure, part of the 30S ribosomal subunit.

The protein localises to the plastid. It localises to the chloroplast. Its function is as follows. Binds 16S rRNA, required for the assembly of 30S particles. The chain is Small ribosomal subunit protein uS14c from Draba nemorosa (Woodland whitlowgrass).